Consider the following 1370-residue polypeptide: Zinc finger MYM-type protein 3 (1370 aa).

Composition is skewed to low complexity over residues 1–12 (MDPSDFPSPFDP) and 52–61 (PSSGALDLLD). Disordered regions lie at residues 1-72 (MDPS…DPGV) and 90-301 (PSPP…QRAG). The segment covering 230-253 (ASEKPPERKRSERVRRAEPPKPEV) has biased composition (basic and acidic residues). A phosphoserine mark is found at serine 263 and serine 267. A compositionally biased stretch (acidic residues) spans 263-279 (SDEDSDAMVDDPNDEDF). Glycyl lysine isopeptide (Lys-Gly) (interchain with G-Cter in SUMO2) cross-links involve residues lysine 308, lysine 320, and lysine 328. MYM-type zinc fingers lie at residues 332 to 366 (QLFC…TKDS), 378 to 422 (HEFC…LHEV), 429 to 464 (HRLC…KTGS), 477 to 511 (KRFC…FEML), 521 to 559 (SLFC…PCYY), 567 to 604 (YQFC…KPEV), 612 to 646 (FQFC…HEKL), 653 to 692 (KSFC…GVTE), and 699 to 733 (WDFC…LETI). Serine 464 carries the phosphoserine modification. Residues 759-794 (NLDTQSGPESLLNSQSPESKPQTPSQTKVENSNTVR) show a composition bias toward polar residues. Residues 759–830 (NLDTQSGPES…PPPPATPRKN (72 aa)) form a disordered region. Residues lysine 778 and lysine 786 each participate in a glycyl lysine isopeptide (Lys-Gly) (interchain with G-Cter in SUMO2) cross-link. Phosphothreonine is present on threonine 795. Lysine 804 participates in a covalent cross-link: Glycyl lysine isopeptide (Lys-Gly) (interchain with G-Cter in SUMO2). The segment covering 815-826 (APTPPPPPPPAT) has biased composition (pro residues). Residues threonine 817 and threonine 826 each carry the phosphothreonine modification. Glycyl lysine isopeptide (Lys-Gly) (interchain with G-Cter in SUMO2) cross-links involve residues lysine 847, lysine 861, lysine 920, and lysine 1275.

May be a component of a BHC histone deacetylase complex that contains HDAC1, HDAC2, HMG20B/BRAF35, KDM1A, RCOR1/CoREST, PHF21A/BHC80, ZMYM2, ZNF217, ZMYM3, GSE1 and GTF2I. As to expression, most abundant in brain, moderate in muscle and heart, low in other tissues except placenta.

It is found in the nucleus. Its function is as follows. Plays a role in the regulation of cell morphology and cytoskeletal organization. The protein is Zinc finger MYM-type protein 3 (ZMYM3) of Homo sapiens (Human).